A 140-amino-acid chain; its full sequence is MSIRERLLATVSKYIAAYNEFDPSAMKTVRTPTCLTHGVAPTCKFTQSMEEHTRHMMLSRGVFRSVNASIVDDNITVVDEVSRQVVVKVKIRCETTVGPYENEAMFIMAMNEEGALVDEIFQFLDTARFRQFQGRLEEAQ.

The protein belongs to the trt14 isomerase family. As to quaternary structure, homodimer.

It participates in secondary metabolite biosynthesis; terpenoid biosynthesis. Part of the gene cluster B that mediates the biosynthesis of austinol and dehydroaustinol, two fungal meroterpenoids. The first step of the pathway is the synthesis of 3,5-dimethylorsellinic acid by the polyketide synthase ausA. 3,5-dimethylorsellinic acid is then prenylated by the polyprenyl transferase ausN. Further epoxidation by the FAD-dependent monooxygenase ausM and cyclization by the probable terpene cyclase ausL lead to the formation of protoaustinoid A. Protoaustinoid A is then oxidized to spiro-lactone preaustinoid A3 by the combined action of the FAD-binding monooxygenases ausB and ausC, and the dioxygenase ausE. Acid-catalyzed keto-rearrangement and ring contraction of the tetraketide portion of preaustinoid A3 by ausJ lead to the formation of preaustinoid A4. The aldo-keto reductase ausK, with the help of ausH, is involved in the next step by transforming preaustinoid A4 into isoaustinone which is in turn hydroxylated by the P450 monooxygenase ausI to form austinolide. Finally, the cytochrome P450 monooxygenase ausG modifies austinolide to austinol. Austinol can be further modified to dehydroaustinol which forms a diffusible complex with diorcinol that initiates conidiation. Due to genetic rearrangements of the clusters and the subsequent loss of some enzymes, the end products of the Emericella nidulans austinoid biosynthesis clusters are austinol and dehydroaustinol, even if additional enzymes, such as the O-acetyltransferase ausQ and the cytochrome P450 monooxygenase ausR are still functional. AusS is necessary for austinoids production and may play a possible function as a regulator. The sequence is that of Austinoid biosynthesis clusters protein S from Emericella nidulans (strain FGSC A4 / ATCC 38163 / CBS 112.46 / NRRL 194 / M139) (Aspergillus nidulans).